We begin with the raw amino-acid sequence, 341 residues long: MILLENVKKIYKAKSGDVTAVDNANLKIEKGEIFGVIGYSGAGKSSLIRLFNQLEKPTSGQITIANRVISAITGSELRKARQEIGMIFQHFNLLWSRTVRENIEFPLEIAGVDKAKRRKRVDELIHLVGLEGRGDAYPSQLSGGQKQRVGIARALANNPQVLLCDEATSALDPETTDQILDLLLDINKRLGLTIVLITHEMHVIRKICNRVAVMEKGKIVETGPVLDVFRNPQQDITKRFVQQLTDSEDTNETIESLIEKYPDGKVVRLQFIGEAVERPVLQRLMQRSDIEVSILQGNIAQTNNGSYGSLVVHLNGEETAIQQAIEGIHQDQVELEVIAHG.

Residues Ile-2–Val-241 form the ABC transporter domain. An ATP-binding site is contributed by Gly-38–Ser-45.

Belongs to the ABC transporter superfamily. Methionine importer (TC 3.A.1.24) family. As to quaternary structure, the complex is composed of two ATP-binding proteins (MetN), two transmembrane proteins (MetI) and a solute-binding protein (MetQ).

The protein resides in the cell membrane. The enzyme catalyses L-methionine(out) + ATP + H2O = L-methionine(in) + ADP + phosphate + H(+). The catalysed reaction is D-methionine(out) + ATP + H2O = D-methionine(in) + ADP + phosphate + H(+). In terms of biological role, part of the ABC transporter complex MetNIQ involved in methionine import. Responsible for energy coupling to the transport system. The polypeptide is Methionine import ATP-binding protein MetN 3 (Bacillus cereus (strain ATCC 10987 / NRS 248)).